The following is a 462-amino-acid chain: GTPase Der (462 aa).

2 EngA-type G domains span residues 2–164 (QKVI…EEKV) and 198–369 (IRVG…KNYT). GTP contacts are provided by residues 8–15 (GKPNVGKS), 55–59 (DSGGL), 116–119 (NKID), 204–211 (GRVNVGKS), 251–255 (DTAGI), and 315–318 (NKWD). Positions 370-454 (QKIQTSKLNE…PIVLIPKKRG (85 aa)) constitute a KH-like domain.

It belongs to the TRAFAC class TrmE-Era-EngA-EngB-Septin-like GTPase superfamily. EngA (Der) GTPase family. In terms of assembly, associates with the 50S ribosomal subunit.

Its function is as follows. GTPase that plays an essential role in the late steps of ribosome biogenesis. In Campylobacter concisus (strain 13826), this protein is GTPase Der.